Reading from the N-terminus, the 20-residue chain is C-reactive protein (20 aa).

The region spanning 1–20 (SPVAASYRATAGLAGKALDF) is the Pentraxin (PTX) domain.

It belongs to the pentraxin family. Homodimer; disulfide-linked. It is not known if it assembles into a pentraxin (or pentaxin) structure. Pentraxins have a discoid arrangement of 5 non-covalently bound subunits. Post-translationally, glycosylated.

The protein resides in the secreted. Its function is as follows. Displays several functions associated with host defense: it promotes agglutination, bacterial capsular swelling, phagocytosis, and complement fixation through its calcium-dependent binding to phosphorylcholine. This Mustelus canis (Smooth dogfish) protein is C-reactive protein.